We begin with the raw amino-acid sequence, 318 residues long: MVGYDPKADDRDISNVEVAVAGSVSGLVTRVLISPLDVIKIRFQLQIERLSRSDPNAKYHGILQAGRQILQEEGPTAFWKGHIPAQLLSIGYGAVQFLSFEALTELVHRASVRDARDFSVHFLCGGLSACVATLAVHPVDVLRTRFAAQGEPRVYKTLRDAVVTMYRTEGPLVFYKGLNPTLIAIFPYAGFQFSIYSSLKRAYEWALPAEGKKNGNFKNLLCGSGAGVISKTLTYPLDLFKKRLQVGGFEQARASFGQVRSYKGLLDCAGQVLREEGAQGCFKGLSPSLLKAALSTGLVFFWYELFCNFFHHMRKADS.

3 Solcar repeats span residues 13-106, 116-202, and 214-309; these read ISNV…LTEL, RDFS…LKRA, and NGNF…FCNF. A helical membrane pass occupies residues 19 to 39; the sequence is AVAGSVSGLVTRVLISPLDVI. At Ser-51 the chain carries Phosphoserine. The next 4 helical transmembrane spans lie at 87 to 107, 122 to 142, 173 to 193, and 220 to 240; these read LLSI…TELV, FLCG…VDVL, VFYK…GFQF, and LLCG…LDLF. The Substrate recognition motif lies at 241–246; the sequence is KKRLQV. A helical transmembrane segment spans residues 293 to 313; the sequence is ALSTGLVFFWYELFCNFFHHM.

Belongs to the mitochondrial carrier (TC 2.A.29) family.

The protein localises to the mitochondrion membrane. It carries out the reaction thiamine phosphate(out) + thiamine diphosphate(in) = thiamine phosphate(in) + thiamine diphosphate(out). Its function is as follows. Mitochondrial transporter mediating uptake of thiamine diphosphate into mitochondria. It is not clear if the antiporter activity is affected by the membrane potential or by the proton electrochemical gradient. The sequence is that of Mitochondrial thiamine pyrophosphate carrier (SLC25A19) from Bos taurus (Bovine).